The following is a 317-amino-acid chain: Egg-laying defective protein 26 (317 aa).

The LRAT domain maps to 156–277 (EVNVSGVKFY…CSTGVPFSYD (122 aa)). Residues His-166 and His-178 contribute to the active site. Cys-261 acts as the Acyl-thioester intermediate in catalysis.

Highly expressed in the cells of the spermatheca, the mouth, and the lining of the pharynx, the rectum, and the excretory canal. Also expressed in the pharyngeal intestinal junction cell.

The protein localises to the apical cell membrane. In terms of biological role, putative acyltransferase. Plays a role in the morphogenesis of a vulval toroid cell, vulF, which is located where the vulva and the uterus connect. Not required for specifying vulval cell fate. The sequence is that of Egg-laying defective protein 26 from Caenorhabditis elegans.